The sequence spans 77 residues: Acyl carrier protein (77 aa).

The region spanning 4–77 (SETFEKVKKI…TVQAAVDXIN (74 aa)) is the Carrier domain. S40 is modified (O-(pantetheine 4'-phosphoryl)serine).

The protein belongs to the acyl carrier protein (ACP) family. 4'-phosphopantetheine is transferred from CoA to a specific serine of apo-ACP by AcpS. This modification is essential for activity because fatty acids are bound in thioester linkage to the sulfhydryl of the prosthetic group.

It localises to the cytoplasm. It participates in lipid metabolism; fatty acid biosynthesis. Carrier of the growing fatty acid chain in fatty acid biosynthesis. The sequence is that of Acyl carrier protein from Anabaena variabilis.